Here is a 251-residue protein sequence, read N- to C-terminus: Triosephosphate isomerase (251 aa).

Residue 9–11 (NWK) participates in substrate binding. The active-site Electrophile is the H95. E167 acts as the Proton acceptor in catalysis. Residues G173, S213, and 234–235 (GG) each bind substrate. S213 bears the Phosphoserine mark.

This sequence belongs to the triosephosphate isomerase family. Homodimer.

The protein localises to the cytoplasm. The enzyme catalyses D-glyceraldehyde 3-phosphate = dihydroxyacetone phosphate. Its pathway is carbohydrate biosynthesis; gluconeogenesis. It participates in carbohydrate degradation; glycolysis; D-glyceraldehyde 3-phosphate from glycerone phosphate: step 1/1. Functionally, involved in the gluconeogenesis. Catalyzes stereospecifically the conversion of dihydroxyacetone phosphate (DHAP) to D-glyceraldehyde-3-phosphate (G3P). This chain is Triosephosphate isomerase, found in Bacillus cereus (strain ATCC 10987 / NRS 248).